Here is a 188-residue protein sequence, read N- to C-terminus: Shikimate kinase (188 aa).

21–26 contributes to the ATP binding site; it reads GAGKTT. Threonine 25 provides a ligand contact to Mg(2+). Positions 43, 67, and 90 each coordinate substrate. Arginine 130 serves as a coordination point for ATP. Residue arginine 148 coordinates substrate.

The protein belongs to the shikimate kinase family. Monomer. Mg(2+) is required as a cofactor.

It is found in the cytoplasm. The enzyme catalyses shikimate + ATP = 3-phosphoshikimate + ADP + H(+). It functions in the pathway metabolic intermediate biosynthesis; chorismate biosynthesis; chorismate from D-erythrose 4-phosphate and phosphoenolpyruvate: step 5/7. Functionally, catalyzes the specific phosphorylation of the 3-hydroxyl group of shikimic acid using ATP as a cosubstrate. The chain is Shikimate kinase from Geobacillus kaustophilus (strain HTA426).